A 1044-amino-acid polypeptide reads, in one-letter code: Disease resistance protein PIK6-NP (1044 aa).

The segment at leucine 3 to valine 184 is structured coiled coil (CC) domain. The 357-residue stretch at lysine 187–glutamine 543 folds into the NB-ARC domain. The tract at residues glutamine 258–methionine 302 is disordered. LRR repeat units follow at residues leucine 635 to tyrosine 657, methionine 682 to leucine 705, and glutamate 706 to leucine 728. Positions glycine 737–lysine 771 are disordered. 6 LRR repeats span residues leucine 808 to serine 834, serine 840 to methionine 862, proline 866 to isoleucine 888, threonine 889 to asparagine 911, lysine 935 to serine 958, and methionine 980 to asparagine 1004.

It belongs to the disease resistance NB-LRR family.

Probable disease resistance protein. Resistance proteins guard the plant against pathogens that contain an appropriate avirulence protein via an indirect interaction with this avirulence protein. That triggers a defense system including the hypersensitive response, which restricts the pathogen growth. At the opposite of cultivar Kusabue, the cultivar Nipponbare doesn't recognize the effector avirulence protein AVR-Pik from M.oryzae. In Oryza sativa subsp. japonica (Rice), this protein is Disease resistance protein PIK6-NP.